The primary structure comprises 428 residues: MLQTPMTGMVQKLDQKLPVANEYLLLSGGVREGVVDLDLDELNVYARGTDYDMDFTLLVPALKLHDRNQPVTLDMRHSALCHSWLSLRLFDEGTISKWKGCCTIADHINGATNYFFSPTKVADWFYDSISIVLSEIQKKPQRGMPKVEKVEKNGTIISIILGVGSSRMLYDIVPVVSFKGWPAVAQSWLMENHFWDGKITEEEVISGFYLVPACSYKGKKDNEWRLSFARSEVQLKKCISGSLMQAYQACKAIIIKLLSRPKAISPYHLRSMMLWACDRLPASYLAQEDYAAHFLLGLIDDLQHCLVNKMCPNYFIPQCNMLEHLSEETVMLHARKLSSVRSDPAEHLRTAIEHVKAANRLTLKLQRRGSTTSIPSPQSDGGDPNQPDDRLAKKLQQLVTENPGKSISVFINPDDVTRPHFRIDDKFF.

A disordered region spans residues 366-389; that stretch reads QRRGSTTSIPSPQSDGGDPNQPDD. A compositionally biased stretch (polar residues) spans 368 to 379; sequence RGSTTSIPSPQS. T372 is subject to Phosphothreonine. S373, S376, and S379 each carry phosphoserine.

Belongs to the mab-21 family.

Its function is as follows. Probable nucleotidyltransferase that catalyzes the formation of cyclic dinucleotide second messenger in response to some unknown stimulus. The chain is Nucleotidyltransferase MB21D2 from Mus musculus (Mouse).